The primary structure comprises 477 residues: Bifunctional protein HldE (477 aa).

The tract at residues 1 to 318 (MKVTLPEFER…ENAVRGRADT (318 aa)) is ribokinase. Residue 195-198 (NLSE) participates in ATP binding. D264 is an active-site residue. Residues 344–477 (MTNGVFDILH…IKKIQKDSDK (134 aa)) are cytidylyltransferase.

The protein in the N-terminal section; belongs to the carbohydrate kinase PfkB family. In the C-terminal section; belongs to the cytidylyltransferase family. Homodimer.

The enzyme catalyses D-glycero-beta-D-manno-heptose 7-phosphate + ATP = D-glycero-beta-D-manno-heptose 1,7-bisphosphate + ADP + H(+). It carries out the reaction D-glycero-beta-D-manno-heptose 1-phosphate + ATP + H(+) = ADP-D-glycero-beta-D-manno-heptose + diphosphate. The protein operates within nucleotide-sugar biosynthesis; ADP-L-glycero-beta-D-manno-heptose biosynthesis; ADP-L-glycero-beta-D-manno-heptose from D-glycero-beta-D-manno-heptose 7-phosphate: step 1/4. Its pathway is nucleotide-sugar biosynthesis; ADP-L-glycero-beta-D-manno-heptose biosynthesis; ADP-L-glycero-beta-D-manno-heptose from D-glycero-beta-D-manno-heptose 7-phosphate: step 3/4. Functionally, catalyzes the phosphorylation of D-glycero-D-manno-heptose 7-phosphate at the C-1 position to selectively form D-glycero-beta-D-manno-heptose-1,7-bisphosphate. Catalyzes the ADP transfer from ATP to D-glycero-beta-D-manno-heptose 1-phosphate, yielding ADP-D-glycero-beta-D-manno-heptose. In Citrobacter koseri (strain ATCC BAA-895 / CDC 4225-83 / SGSC4696), this protein is Bifunctional protein HldE.